A 347-amino-acid chain; its full sequence is Ferrochelatase (347 aa).

Cys-158 is a [2Fe-2S] cluster binding site. 2 residues coordinate Fe cation: His-193 and Glu-272. [2Fe-2S] cluster-binding residues include Cys-332, Cys-339, and Cys-341.

It belongs to the ferrochelatase family. As to quaternary structure, homodimer. [2Fe-2S] cluster serves as cofactor.

It is found in the cytoplasm. The catalysed reaction is heme b + 2 H(+) = protoporphyrin IX + Fe(2+). The protein operates within porphyrin-containing compound metabolism; protoheme biosynthesis; protoheme from protoporphyrin-IX: step 1/1. In terms of biological role, catalyzes the ferrous insertion into protoporphyrin IX. In Caulobacter vibrioides (strain ATCC 19089 / CIP 103742 / CB 15) (Caulobacter crescentus), this protein is Ferrochelatase.